We begin with the raw amino-acid sequence, 70 residues long: Probable non-specific lipid-transfer protein 2 (70 aa).

Intrachain disulfides connect cysteine 4–cysteine 38, cysteine 12–cysteine 26, cysteine 27–cysteine 62, and cysteine 36–cysteine 69.

Its function is as follows. Potential phospholipid transfer protein. The chain is Probable non-specific lipid-transfer protein 2 from Zea mays (Maize).